The chain runs to 122 residues: Large ribosomal subunit protein uL14 (122 aa).

Belongs to the universal ribosomal protein uL14 family. In terms of assembly, part of the 50S ribosomal subunit. Forms a cluster with proteins L3 and L19. In the 70S ribosome, L14 and L19 interact and together make contacts with the 16S rRNA in bridges B5 and B8.

Binds to 23S rRNA. Forms part of two intersubunit bridges in the 70S ribosome. The polypeptide is Large ribosomal subunit protein uL14 (Mesomycoplasma hyopneumoniae (strain 232) (Mycoplasma hyopneumoniae)).